The following is a 213-amino-acid chain: MILRIPSLLYLFTLLTAVYAVKFDLTSDRNPKPKCIWNFASAHSLVIVTANVPGEPDQQVDIQILDGSERGNVYLSKKDVRGEARLAVTTHESADVGVCLTNRYTGSGNPRVVRSVELDVDIGADAIDYNAIANQESLSILEVEMRKLEAVTKEIVEEMGYLQRREMRMRDTNESTNQRVKVFSVLIICCTIGLGVWQLLHLRSFFKRKYLID.

Residues 1–20 (MILRIPSLLYLFTLLTAVYA) form the signal peptide. Over 21–181 (VKFDLTSDRN…TNESTNQRVK (161 aa)) the chain is Lumenal. The region spanning 33–122 (PKCIWNFASA…VRSVELDVDI (90 aa)) is the GOLD domain. Residues 182–202 (VFSVLIICCTIGLGVWQLLHL) form a helical membrane-spanning segment. The Cytoplasmic segment spans residues 203–213 (RSFFKRKYLID).

It belongs to the EMP24/GP25L family.

The protein localises to the endoplasmic reticulum membrane. The protein resides in the golgi apparatus membrane. Its function is as follows. Constituent of COPII-coated endoplasmic reticulum-derived transport vesicles. Required for efficient transport of a subset of secretory proteins to the Golgi. Facilitates retrograde transport from the Golgi to the endoplasmic reticulum. This is Endoplasmic reticulum vesicle protein 25 (ERV25) from Cryptococcus neoformans var. neoformans serotype D (strain JEC21 / ATCC MYA-565) (Filobasidiella neoformans).